A 690-amino-acid polypeptide reads, in one-letter code: Ras guanyl-releasing protein 3 (690 aa).

Positions 3–125 (SSGLGKAATL…SLIDISSIPS (123 aa)) constitute an N-terminal Ras-GEF domain. Residues 152 to 383 (EPIELAEHLT…YKLSLVLEPR (232 aa)) enclose the Ras-GEF domain. EF-hand domains are found at residues 420–455 (HIRKLVESVFRNYDHDHDGYISQEDFESIAANFPFL) and 458–484 (FCVLDKDQDGLISKDEMMAYFLRAKSQ). Ca(2+) contacts are provided by Asp433, Asp435, Asp437, Tyr439, Asp444, Asp462, Asp464, Asp466, and Glu473. The Phorbol-ester/DAG-type zinc finger occupies 494–544 (IHNFQEMTYLKPTFCEHCAGFLWGIIKQGYKCKDCGANCHKQCKDLLVLAC). The segment at 667–690 (VDRGTEFELDQDEGEETRQDGEDG) is disordered.

The protein belongs to the RASGRP family.

In terms of biological role, guanine nucleotide exchange factor (GEF) for Ras and Rap1. The sequence is that of Ras guanyl-releasing protein 3 (RASGRP3) from Homo sapiens (Human).